A 215-amino-acid polypeptide reads, in one-letter code: Deoxyadenosine kinase (215 aa).

Residue 9-17 (GPIGAGKSS) participates in ATP binding. Substrate-binding residues include E33, Y45, and N56. Residue D79 is the Proton acceptor of the active site. Substrate contacts are provided by R80, D85, and E150.

This sequence belongs to the DCK/DGK family. In terms of assembly, heterodimer of a deoxyadenosine (DAK) and a deoxyguanosine kinase (DGK).

The catalysed reaction is 2'-deoxyadenosine + ATP = dAMP + ADP + H(+). Its function is as follows. DGK/DAK plays an essential role in generating the deoxyribonucleotide precursors, dGTP and dATP, for DNA metabolism. This chain is Deoxyadenosine kinase, found in Lactobacillus acidophilus (strain ATCC 700396 / NCK56 / N2 / NCFM).